The chain runs to 337 residues: Glyceraldehyde-3-phosphate dehydrogenase 2 (337 aa).

NAD(+) contacts are provided by residues 11-12, aspartate 35, arginine 79, and threonine 121; that span reads RI. Residues 153 to 155, threonine 184, arginine 199, 212 to 213, and arginine 235 contribute to the D-glyceraldehyde 3-phosphate site; these read SCT and TG. The active-site Nucleophile is the cysteine 154. Residue asparagine 317 coordinates NAD(+).

This sequence belongs to the glyceraldehyde-3-phosphate dehydrogenase family. In terms of assembly, homotetramer.

It is found in the cytoplasm. The catalysed reaction is D-glyceraldehyde 3-phosphate + phosphate + NADP(+) = (2R)-3-phospho-glyceroyl phosphate + NADPH + H(+). It catalyses the reaction D-glyceraldehyde 3-phosphate + phosphate + NAD(+) = (2R)-3-phospho-glyceroyl phosphate + NADH + H(+). Its pathway is carbohydrate degradation; glycolysis; pyruvate from D-glyceraldehyde 3-phosphate: step 1/5. In terms of biological role, involved in photosynthetic carbon assimilation. Catalyzes the NAD(P)-dependent oxidative phosphorylation of glyceraldehyde 3-phosphate (G3P) to 1,3-bisphosphoglycerate (BPG). The first reaction step involves the formation of a hemiacetal intermediate between G3P and a cysteine residue, and this hemiacetal intermediate is then oxidized to a thioester, with concomitant reduction of NAD to NADH. The reduced NADH is then exchanged with the second NAD, and the thioester is attacked by a nucleophilic inorganic phosphate to produce BPG. It can use both NADP and NAD. The sequence is that of Glyceraldehyde-3-phosphate dehydrogenase 2 (gap2) from Synechocystis sp. (strain ATCC 27184 / PCC 6803 / Kazusa).